Consider the following 474-residue polypeptide: Photosystem II CP43 reaction center protein (474 aa).

The propeptide occupies 1–14 (MKTLYSLRRFYPVE). Threonine 15 carries the post-translational modification N-acetylthreonine. Position 15 is a phosphothreonine (threonine 15). 5 helical membrane-spanning segments follow: residues 69 to 93 (LFEV…PHLA), 134 to 155 (LLGP…KDRN), 178 to 201 (KALY…RKIT), 256 to 276 (KPFA…LSYS), and 292 to 313 (WFNN…ASQA). Residue glutamate 368 participates in [CaMn4O5] cluster binding. Residues 448-472 (RARAAAAGFEKGIDRDFEPVLSMTP) form a helical membrane-spanning segment.

This sequence belongs to the PsbB/PsbC family. PsbC subfamily. PSII is composed of 1 copy each of membrane proteins PsbA, PsbB, PsbC, PsbD, PsbE, PsbF, PsbH, PsbI, PsbJ, PsbK, PsbL, PsbM, PsbT, PsbX, PsbY, PsbZ, Psb30/Ycf12, at least 3 peripheral proteins of the oxygen-evolving complex and a large number of cofactors. It forms dimeric complexes. Requires Binds multiple chlorophylls and provides some of the ligands for the Ca-4Mn-5O cluster of the oxygen-evolving complex. It may also provide a ligand for a Cl- that is required for oxygen evolution. PSII binds additional chlorophylls, carotenoids and specific lipids. as cofactor.

It is found in the plastid. Its subcellular location is the chloroplast thylakoid membrane. Functionally, one of the components of the core complex of photosystem II (PSII). It binds chlorophyll and helps catalyze the primary light-induced photochemical processes of PSII. PSII is a light-driven water:plastoquinone oxidoreductase, using light energy to abstract electrons from H(2)O, generating O(2) and a proton gradient subsequently used for ATP formation. This Citrus sinensis (Sweet orange) protein is Photosystem II CP43 reaction center protein.